Here is a 93-residue protein sequence, read N- to C-terminus: Acylphosphatase (93 aa).

Residues Cys5 and Cys49 are joined by a disulfide bond. The region spanning 5–93 is the Acylphosphatase-like domain; sequence CIIAWVYGRV…ETLTGFSIRY (89 aa). Residues Arg20 and Asn38 contribute to the active site.

It belongs to the acylphosphatase family.

It carries out the reaction an acyl phosphate + H2O = a carboxylate + phosphate + H(+). The sequence is that of Acylphosphatase from Salmonella typhi.